The following is a 663-amino-acid chain: Beta-galactosidase YesZ (663 aa).

A substrate-binding site is contributed by Arg-106. Cys-110 is a Zn(2+) binding site. Asn-144 provides a ligand contact to substrate. The Proton donor role is filled by Glu-145. Cys-153, Cys-155, and Cys-158 together coordinate Zn(2+). The active-site Nucleophile is the Glu-296. Residue 345 to 348 (EISH) coordinates substrate.

Belongs to the glycosyl hydrolase 42 family. As to quaternary structure, homotrimer.

The enzyme catalyses Hydrolysis of terminal non-reducing beta-D-galactose residues in beta-D-galactosides.. Functionally, may play a role in the degradation of rhamnogalacturonan derived from plant cell walls. The polypeptide is Beta-galactosidase YesZ (yesZ) (Bacillus subtilis (strain 168)).